A 245-amino-acid polypeptide reads, in one-letter code: tRNA (guanine-N(7)-)-methyltransferase (245 aa).

Residues Glu69, Glu94, Asp121, and Asp144 each coordinate S-adenosyl-L-methionine. Residue Asp144 is part of the active site. Residues Lys148, Asp180, and 217-220 (TKFE) contribute to the substrate site. The segment at 200 to 225 (NLSSSGDYVPRPENRPKTKFERRGEG) is disordered. Positions 209 to 225 (PRPENRPKTKFERRGEG) are enriched in basic and acidic residues.

The protein belongs to the class I-like SAM-binding methyltransferase superfamily. TrmB family.

The catalysed reaction is guanosine(46) in tRNA + S-adenosyl-L-methionine = N(7)-methylguanosine(46) in tRNA + S-adenosyl-L-homocysteine. The protein operates within tRNA modification; N(7)-methylguanine-tRNA biosynthesis. In terms of biological role, catalyzes the formation of N(7)-methylguanine at position 46 (m7G46) in tRNA. This Idiomarina loihiensis (strain ATCC BAA-735 / DSM 15497 / L2-TR) protein is tRNA (guanine-N(7)-)-methyltransferase.